The chain runs to 656 residues: Protein NO VEIN-LIKE (656 aa).

Residues 283–375 form a disordered region; it reads DKDYCGKHTR…HVKQKIPKSA (93 aa). Residues 299-308 are compositionally biased toward acidic residues; that stretch reads EENDSADYEV. Basic and acidic residues predominate over residues 342–353; sequence ESRNHEKSDSPK. Basic residues predominate over residues 354 to 371; sequence LLRRGPSKLRRGHVKQKI.

This chain is Protein NO VEIN-LIKE, found in Arabidopsis thaliana (Mouse-ear cress).